Reading from the N-terminus, the 514-residue chain is F-box-like/WD repeat-containing protein TBL1XR1 (514 aa).

Ser-2 carries the post-translational modification N-acetylserine. The LisH domain occupies 4–36 (SSDEVNFLVYRYLQESGFSHSAFTFGIESHISQ). In terms of domain architecture, F-box-like spans 41–86 (GALVPPAALISIIQKGLQYVEAEVSINEDGTLFDGRPIESLSLIDA). Position 102 is an N6-acetyllysine (Lys-102). Ser-119 is subject to Phosphoserine. Positions 120–135 (QQGSAKNGENTANGEE) are enriched in low complexity. The tract at residues 120-139 (QQGSAKNGENTANGEENGAH) is disordered. WD repeat units follow at residues 167–206 (GHESEVFICAWNPVSDLLASGSGDSTARIWNLSENSTSGS), 223–262 (PSNKDVTSLDWNSEGTLLATGSYDGFARIWTKDGNLASTL), 264–303 (QHKGPIFALKWNKKGNFILSAGVDKTTIIWDAHTGEAKQQ), 306–344 (FHSAPALDVDWQSNNTFASCSTDMCIHVCKLGQDRPIKT), 347–386 (GHTNEVNAIKWDPTGNLLASCSDDMTLKIWSMKQDNCVHD), 389–437 (AHNK…CIHT), 440–479 (KHQEPVYSVAFSPDGRYLASGSFDKCVHIWNTQTGALVHS), and 481–513 (RGTGGIFEVCWNAAGDKVGASASDGSVCVLDLR). Residue Lys-277 forms a Glycyl lysine isopeptide (Lys-Gly) (interchain with G-Cter in SUMO2) linkage.

Belongs to the WD repeat EBI family. In terms of assembly, component of the N-Cor repressor complex, at least composed of NCOR1, NCOR2, HDAC3, TBL1X, TBL1XR1, CORO2A and GPS2. Probable component of some E3 ubiquitin ligase complex. Interacts with histones H2B and H4. Interacts with MECP2; bridges interaction between MECP2 and NCOR1. Interacts with USP44. As to expression, widely expressed including the pituitary, hypothalamus, white and brown adipose tissue, muscle and liver.

The protein localises to the nucleus. F-box-like protein involved in the recruitment of the ubiquitin/19S proteasome complex to nuclear receptor-regulated transcription units. Plays an essential role in transcription activation mediated by nuclear receptors. Probably acts as integral component of the N-Cor corepressor complex that mediates the recruitment of the 19S proteasome complex, leading to the subsequent proteasomal degradation of N-Cor complex, thereby allowing cofactor exchange, and transcription activation. The protein is F-box-like/WD repeat-containing protein TBL1XR1 (TBL1XR1) of Homo sapiens (Human).